The chain runs to 377 residues: Geranylgeranyl transferase type-1 subunit beta (377 aa).

PFTB repeat units lie at residues lysine 144–asparagine 186, methionine 193–glycine 234, leucine 245–lysine 284, and phenylalanine 291–glutamate 333. Residues histidine 219–glycine 221 and arginine 263–lysine 266 each bind geranylgeranyl diphosphate. 2 residues coordinate Zn(2+): aspartate 269 and cysteine 271. Residue tyrosine 272 to tryptophan 275 participates in geranylgeranyl diphosphate binding. Histidine 321 lines the Zn(2+) pocket.

This sequence belongs to the protein prenyltransferase subunit beta family. As to quaternary structure, heterodimer of FNTA and PGGT1B. PGGT1B mediates interaction with substrate peptides. Zn(2+) is required as a cofactor. Requires Mg(2+) as cofactor.

The enzyme catalyses geranylgeranyl diphosphate + L-cysteinyl-[protein] = S-geranylgeranyl-L-cysteinyl-[protein] + diphosphate. Its function is as follows. Catalyzes the transfer of a geranyl-geranyl moiety from geranyl-geranyl pyrophosphate to a cysteine at the fourth position from the C-terminus of proteins having the C-terminal sequence Cys-aliphatic-aliphatic-X. Known substrates include RAC1, RAC2, RAP1A and RAP1B. This Homo sapiens (Human) protein is Geranylgeranyl transferase type-1 subunit beta (PGGT1B).